Consider the following 459-residue polypeptide: Cysteine desulfurase (459 aa).

Residues 1–17 (MVGSVAGNMLLRAAWRR) constitute a mitochondrion transit peptide. 5 residues coordinate pyridoxal 5'-phosphate: A129, T130, Q237, S257, and H259. K260 bears the N6-(pyridoxal phosphate)lysine mark. T297 serves as a coordination point for pyridoxal 5'-phosphate. C383 functions as the Cysteine persulfide intermediate in the catalytic mechanism. A [2Fe-2S] cluster-binding site is contributed by C383. C383 contributes to the Zn(2+) binding site. Residue C383 is modified to Cysteine persulfide.

Belongs to the class-V pyridoxal-phosphate-dependent aminotransferase family. NifS/IscS subfamily. As to quaternary structure, homodimer. Component of the mitochondrial core iron-sulfur cluster (ISC) complex composed of NFS1, LYRM4, NDUFAB1, ISCU, FXN, and FDX2; this complex is a heterohexamer containing two copies of each monomer. Component of cyteine desulfurase complex composed of NFS1, LYRM4 and NDUFAB1; this complex contributes to the activation of cysteine desulfurase activity and NFS1 stabilization. Interacts (homodimer form) with ISCU (D-state); each monomer interacts with the C-terminal regions of each NFS1 monomer. Interacts with HSPA9. Interacts (via homodimer form) with FDX2. Interacts (via homodimer form) with FXN. Interacts with LYRM4. Component of a complex composed of FXN, NFS1, LYRM4 and ISCU. The cofactor is pyridoxal 5'-phosphate. Post-translationally, N-gluconoylated. In terms of processing, cysteine persulfide intermediate is reduced by thiol-containing molecules like glutathione and L-cysteine. Persulfide reduction is a rate-limiting step of cysteine desulfurase catalytic cycle. As to expression, ubiquitous.

Its subcellular location is the mitochondrion. The catalysed reaction is (sulfur carrier)-H + L-cysteine = (sulfur carrier)-SH + L-alanine. It carries out the reaction L-cysteinyl-[cysteine desulfurase] + L-cysteine = S-sulfanyl-L-cysteinyl-[cysteine desulfurase] + L-alanine. Active only in complex with LYRM4. Mitochondrial cysteine desulfurase, of the core iron-sulfur cluster (ISC) assembly complex, that catalyzes the desulfuration of L-cysteine to L-alanine, as component of the cysteine desulfurase complex, leading to the formation of a cysteine persulfide intermediate at the active site cysteine residue and participates in the [2Fe-2S] clusters assembly on the scaffolding protein ISCU. The persulfide is then transferred on the flexible Cys loop from the catalytic site of NFS1 to the surface of NFS1. After the NFS1-linked persulfide sulfur is transferred to one of the conserved Cys residues of the scaffold, a reaction assisted by FXN. The core iron-sulfur cluster (ISC) assembly complex is involved in the de novo synthesis of a [2Fe-2S] cluster, the first step of the mitochondrial iron-sulfur protein biogenesis. This process is initiated by the cysteine desulfurase complex (NFS1:LYRM4:NDUFAB1) that produces persulfide which is delivered on the scaffold protein ISCU in a FXN-dependent manner. Then this complex is stabilized by FDX2 which provides reducing equivalents to accomplish the [2Fe-2S] cluster assembly. Finally, the [2Fe-2S] cluster is transferred from ISCU to chaperone proteins, including HSCB, HSPA9 and GLRX5. The polypeptide is Cysteine desulfurase (Mus musculus (Mouse)).